The sequence spans 524 residues: Probable cytochrome P450 519C1 (524 aa).

Residues 1-21 (MNILLLIFYFLVCFLIFDFIK) traverse the membrane as a helical segment. A heme-binding site is contributed by Cys470.

The protein belongs to the cytochrome P450 family. The cofactor is heme.

The protein localises to the membrane. This Dictyostelium discoideum (Social amoeba) protein is Probable cytochrome P450 519C1 (cyp519C1).